The following is a 109-amino-acid chain: Ig kappa chain V region S211 (109 aa).

Residues 1–23 (DVQMTQSPSYLAASPGESVSISC) are framework-1. Residues 24–35 (KASNKSISNNLA) are complementarity-determining-1. The tract at residues 36–50 (WYZZKPGKANKLLIS) is framework-2. The interval 51-57 (SGSTLQS) is complementarity-determining-2. Residues 58-89 (GTPSRFSGSGSDTDFTLTIRSLEFQDFAVYYC) are framework-3. The tract at residues 90 to 98 (ZZYNEPYYT) is complementarity-determining-3. The framework-4 stretch occupies residues 99–108 (FGAGTMLELK).

This is Ig kappa chain V region S211 from Rattus norvegicus (Rat).